A 176-amino-acid polypeptide reads, in one-letter code: Ribosome rescue factor SmrB (176 aa).

In terms of domain architecture, Smr spans 93-168; that stretch reads LDLHGYRQSE…GDAALLVLID (76 aa).

It belongs to the SmrB family. In terms of assembly, associates with collided ribosomes, but not with correctly translating polysomes.

In terms of biological role, acts as a ribosome collision sensor. Detects stalled/collided disomes (pairs of ribosomes where the leading ribosome is stalled and a second ribosome has collided with it) and endonucleolytically cleaves mRNA at the 5' boundary of the stalled ribosome. Stalled/collided disomes form a new interface (primarily via the 30S subunits) that binds SmrB. Cleaved mRNA becomes available for tmRNA ligation, leading to ribosomal subunit dissociation and rescue of stalled ribosomes. This is Ribosome rescue factor SmrB from Shewanella baltica (strain OS195).